Consider the following 215-residue polypeptide: MATGDDIPTFKLVLVGDGGTGKTTFVKRHLTGEFEKKYVATLGVEVHPLIFHTNRGQIRFNVWDTAGQEKFGGLRDGYYIQGQCAIIMFDVTARVTYKNVPNWHRDLVRVCENIPIVLCGNKVDVKDRKVKAKTITFHRKKNLQYYDISAKSNYNFEKPFLWLARKLLGDPNLEFVAMPALAPPEVQMDPTMVAQYEQEIAAAANAELPDDDEDL.

One can recognise a Small GTPase Ran-type domain in the interval 6–170; the sequence is DIPTFKLVLV…LWLARKLLGD (165 aa). GTP contacts are provided by residues 17-24, 35-41, Gly67, 121-124, and 149-151; these read DGGTGKTT, EKKYVAT, NKVD, and SAK. Residues 36-44 are switch-I; the sequence is KKYVATLGV. The interval 67–83 is switch-II; it reads GQEKFGGLRDGYYIQGQ.

The protein belongs to the small GTPase superfamily. Ran family. As to quaternary structure, found in a nuclear export complex with RanGTP, exportin and pre-miRNA.

The protein localises to the nucleus. GTP-binding protein involved in nucleocytoplasmic transport. Required for the import of protein into the nucleus and also for RNA export. Involved in chromatin condensation and control of cell cycle. This Brugia malayi (Filarial nematode worm) protein is GTP-binding nuclear protein Ran.